The following is a 209-amino-acid chain: Orotate phosphoribosyltransferase (209 aa).

Residues Arg96, Lys100, His102, and Glu122–Ser130 contribute to the 5-phospho-alpha-D-ribose 1-diphosphate site. Residue Ser126 coordinates orotate.

The protein belongs to the purine/pyrimidine phosphoribosyltransferase family. PyrE subfamily. In terms of assembly, homodimer. It depends on Mg(2+) as a cofactor.

The catalysed reaction is orotidine 5'-phosphate + diphosphate = orotate + 5-phospho-alpha-D-ribose 1-diphosphate. It functions in the pathway pyrimidine metabolism; UMP biosynthesis via de novo pathway; UMP from orotate: step 1/2. In terms of biological role, catalyzes the transfer of a ribosyl phosphate group from 5-phosphoribose 1-diphosphate to orotate, leading to the formation of orotidine monophosphate (OMP). In Streptococcus agalactiae serotype Ia (strain ATCC 27591 / A909 / CDC SS700), this protein is Orotate phosphoribosyltransferase.